Consider the following 528-residue polypeptide: Probable rhamnogalacturonate lyase A (528 aa).

The first 20 residues, 1 to 20, serve as a signal peptide directing secretion; that stretch reads MLSRTILFSTSFLWVRVANA. 2 cysteine pairs are disulfide-bonded: Cys-50-Cys-93 and Cys-184-Cys-193.

This sequence belongs to the polysaccharide lyase 4 family.

It is found in the secreted. It catalyses the reaction Endotype eliminative cleavage of L-alpha-rhamnopyranosyl-(1-&gt;4)-alpha-D-galactopyranosyluronic acid bonds of rhamnogalacturonan I domains in ramified hairy regions of pectin leaving L-rhamnopyranose at the reducing end and 4-deoxy-4,5-unsaturated D-galactopyranosyluronic acid at the non-reducing end.. Its function is as follows. Pectinolytic enzymes consist of four classes of enzymes: pectin lyase, polygalacturonase, pectin methylesterase and rhamnogalacturonase. Degrades the rhamnogalacturonan I (RG-I) backbone of pectin. The protein is Probable rhamnogalacturonate lyase A (rglA) of Aspergillus flavus (strain ATCC 200026 / FGSC A1120 / IAM 13836 / NRRL 3357 / JCM 12722 / SRRC 167).